The following is a 1105-amino-acid chain: SWI/SNF complex subunit SMARCC1 (1105 aa).

Residue A2 is modified to N-acetylalanine. The segment at L28–T302 is marR-like, BRCT and chromo domains module. The 127-residue stretch at P38–C164 folds into the MarR-like domain. A BRCT; N-terminus domain is found at P168–S211. K179 participates in a covalent cross-link: Glycyl lysine isopeptide (Lys-Gly) (interchain with G-Cter in SUMO2). The region spanning E217–H245 is the Chromo domain. Positions K261–Y285 constitute a BRCT; C-terminus domain. The tract at residues F296–E439 is disordered. Basic and acidic residues predominate over residues T302–A318. Phosphoserine is present on residues S310, S328, and S330. The residue at position 335 (T335) is a Phosphothreonine. K345 and K346 each carry N6-acetyllysine. S350 bears the Phosphoserine mark. K354 carries the N6-acetyllysine modification. At S357 the chain carries Phosphoserine. K359 carries the post-translational modification N6-acetyllysine; alternate. K359 is covalently cross-linked (Glycyl lysine isopeptide (Lys-Gly) (interchain with G-Cter in SUMO2); alternate). Position 398 is a phosphothreonine (T398). In terms of domain architecture, SWIRM spans I449–M546. S573 carries the phosphoserine modification. K592 is covalently cross-linked (Glycyl lysine isopeptide (Lys-Gly) (interchain with G-Cter in SUMO2)). Residues S618–P669 enclose the SANT domain. A Glycyl lysine isopeptide (Lys-Gly) (interchain with G-Cter in SUMO2) cross-link involves residue K739. The tract at residues A745–E860 is disordered. Over residues A776–P785 the composition is skewed to acidic residues. Over residues Q789–E860 the composition is skewed to basic and acidic residues. A Glycyl lysine isopeptide (Lys-Gly) (interchain with G-Cter in SUMO2) cross-link involves residue K796. S822 and S825 each carry phosphoserine. Residues K829 and K856 each participate in a glycyl lysine isopeptide (Lys-Gly) (interchain with G-Cter in SUMO2) cross-link. Positions F914–Q946 form a coiled coil. An N6-acetyllysine modification is found at K948. Disordered regions lie at residues Q956–H1028 and I1041–P1105. Residues Q957–H993 are compositionally biased toward low complexity. Composition is skewed to pro residues over residues Q994 to I1017 and P1048 to P1057. R1064 bears the Asymmetric dimethylarginine mark. The span at M1073–P1105 shows a compositional bias: pro residues.

Belongs to the SMARCC family. As to quaternary structure, component of the multiprotein chromatin-remodeling complexes SWI/SNF: SWI/SNF-A (BAF), SWI/SNF-B (PBAF) and related complexes. The canonical complex contains a catalytic subunit (either SMARCA4/BRG1/BAF190A or SMARCA2/BRM/BAF190B) and at least SMARCE1, ACTL6A/BAF53, SMARCC1/BAF155, SMARCC2/BAF170, and SMARCB1/SNF5/BAF47. Other subunits specific to each of the complexes may also be present permitting several possible combinations developmentally and tissue specific. Component of the BAF complex, which includes at least actin (ACTB), ARID1A/BAF250A, ARID1B/BAF250B, SMARCA2/BRM, SMARCA4/BRG1, ACTL6A/BAF53, ACTL6B/BAF53B, SMARCE1/BAF57, SMARCC1/BAF155, SMARCC2/BAF170, SMARCB1/SNF5/INI1, and one or more SMARCD1/BAF60A, SMARCD2/BAF60B, or SMARCD3/BAF60C. In muscle cells, the BAF complex also contains DPF3. Component of neural progenitors-specific chromatin remodeling complex (npBAF complex) composed of at least, ARID1A/BAF250A or ARID1B/BAF250B, SMARCD1/BAF60A, SMARCD3/BAF60C, SMARCA2/BRM/BAF190B, SMARCA4/BRG1/BAF190A, SMARCB1/BAF47, SMARCC1/BAF155, SMARCE1/BAF57, SMARCC2/BAF170, PHF10/BAF45A, ACTL6A/BAF53A and actin. Component of neuron-specific chromatin remodeling complex (nBAF complex) composed of at least, ARID1A/BAF250A or ARID1B/BAF250B, SMARCD1/BAF60A, SMARCD3/BAF60C, SMARCA2/BRM/BAF190B, SMARCA4/BRG1/BAF190A, SMARCB1/BAF47, SMARCC1/BAF155, SMARCE1/BAF57, SMARCC2/BAF170, DPF1/BAF45B, DPF3/BAF45C, ACTL6B/BAF53B and actin. Component of the SWI/SNF-B (PBAF) chromatin remodeling complex, at least composed of SMARCA4/BRG1, SMARCB1/BAF47/SNF5, ACTL6A/BAF53A or ACTL6B/BAF53B, SMARCE1/BAF57, SMARCD1/BAF60A, SMARCD2/BAF60B, perhaps SMARCD3/BAF60C, SMARCC1/BAF155, SMARCC2/BAF170, PBRM1/BAF180, ARID2/BAF200 and actin. Component of SWI/SNF (GBAF) subcomplex, which includes at least BICRA or BICRAL (mutually exclusive), BRD9, SS18, SMARCA2/BRM, SMARCA4/BRG1/BAF190A, ACTL6A/BAF53, SMARCC1/BAF155, and SMARCD1/BAF60A. May also interact with the SIN3A histone deacetylase transcription repressor complex in conjunction with SMARCA2 and SMARCA4. The minimal complex composed of SMARCC1 and SMARCA4 seems to be able to associate with cyclin such as CCNE1 or transcription factors such as KLF1 or GATA1. Interacts with NR3C1 and SMARD1. Interacts with TRIP12; leading to disrupt interaction between TRIP12 and SMARCE1 and prevent SMARCE1 ubiquitination. Interacts with CEBPB (when not methylated). Interacts with KDM6B. Interacts with MKKS; the interaction takes place predominantly in the cytoplasm and may modulate SMARCC1 location. Interacts with DPF2. Interacts with PRDM1/BLIMP1. Interacts with DPF3a (isoform 2 of DPF3/BAF45C) and with HDGFL2 in a DPF3a-dependent manner. Post-translationally, phosphorylated on undefined residues at the G2/M transition by ERK1 and other kinases. This may contribute to cell cycle specific inactivation of remodeling complexes containing the phosphorylated protein. Expressed in brain, heart, muscle, placenta, lung, liver, muscle, kidney and pancreas.

It is found in the nucleus. It localises to the cytoplasm. Functionally, involved in transcriptional activation and repression of select genes by chromatin remodeling (alteration of DNA-nucleosome topology). Component of SWI/SNF chromatin remodeling complexes that carry out key enzymatic activities, changing chromatin structure by altering DNA-histone contacts within a nucleosome in an ATP-dependent manner. May stimulate the ATPase activity of the catalytic subunit of the complex. Belongs to the neural progenitors-specific chromatin remodeling complex (npBAF complex) and the neuron-specific chromatin remodeling complex (nBAF complex). During neural development a switch from a stem/progenitor to a postmitotic chromatin remodeling mechanism occurs as neurons exit the cell cycle and become committed to their adult state. The transition from proliferating neural stem/progenitor cells to postmitotic neurons requires a switch in subunit composition of the npBAF and nBAF complexes. As neural progenitors exit mitosis and differentiate into neurons, npBAF complexes which contain ACTL6A/BAF53A and PHF10/BAF45A, are exchanged for homologous alternative ACTL6B/BAF53B and DPF1/BAF45B or DPF3/BAF45C subunits in neuron-specific complexes (nBAF). The npBAF complex is essential for the self-renewal/proliferative capacity of the multipotent neural stem cells. The nBAF complex along with CREST plays a role regulating the activity of genes essential for dendrite growth. The sequence is that of SWI/SNF complex subunit SMARCC1 from Homo sapiens (Human).